A 161-amino-acid chain; its full sequence is Vitamin K epoxide reductase complex subunit 1 (161 aa).

Topologically, residues 1–9 (MGTTWRSPG) are cytoplasmic. Residues 10 to 29 (LVRLALCLAGLALSLYALHV) form a helical membrane-spanning segment. Topologically, residues 30–80 (KAARARDENYRALCDVGTAISCSRVFSSRWGRGFGLVEHMLGADSVLNQSN) are lumenal. A disulfide bridge connects residues Cys43 and Cys51. Asn80 lines the (S)-warfarin pocket. The helical transmembrane segment at 81–95 (SIFGCLFYTLQLLLG) threads the bilayer. Over 96–100 (CLRGR) the chain is Cytoplasmic. Residues 101–128 (WASILLVLSSLVSVAGSVYLAWILFFVL) traverse the membrane as a helical segment. At 129–131 (YDF) the chain is on the lumenal side. Residues Cys132 and Cys135 are joined by a disulfide bond. The chain crosses the membrane as a helical span at residues 132 to 153 (CIVCITTYAINVGLMLLSFQKV). The phylloquinone site is built by Cys135 and Tyr139. Position 139 (Tyr139) interacts with (S)-warfarin. At 154 to 161 (PEHKTKKH) the chain is on the cytoplasmic side.

It belongs to the VKOR family. In terms of tissue distribution, detected in liver.

The protein resides in the endoplasmic reticulum membrane. The enzyme catalyses phylloquinone + [protein]-disulfide + H2O = 2,3-epoxyphylloquinone + [protein]-dithiol. The catalysed reaction is phylloquinol + [protein]-disulfide = phylloquinone + [protein]-dithiol. Inhibited by warfarin (coumadin). Warfarin locks VKORC1 in both redox states into the closed conformation. Involved in vitamin K metabolism. Catalytic subunit of the vitamin K epoxide reductase (VKOR) complex which reduces inactive vitamin K 2,3-epoxide to active vitamin K. Vitamin K is required for the gamma-carboxylation of various proteins, including clotting factors, and is required for normal blood coagulation, but also for normal bone development. The protein is Vitamin K epoxide reductase complex subunit 1 (Vkorc1) of Mus musculus (Mouse).